A 145-amino-acid polypeptide reads, in one-letter code: Transcription antitermination protein NusB (145 aa).

The protein belongs to the NusB family.

Its function is as follows. Involved in transcription antitermination. Required for transcription of ribosomal RNA (rRNA) genes. Binds specifically to the boxA antiterminator sequence of the ribosomal RNA (rrn) operons. This Burkholderia cenocepacia (strain HI2424) protein is Transcription antitermination protein NusB.